We begin with the raw amino-acid sequence, 397 residues long: Chorismate synthase (397 aa).

NADP(+) contacts are provided by arginine 40 and arginine 46. FMN contacts are provided by residues 129-131 (RSS), 257-258 (QA), glycine 302, 317-321 (KPISS), and arginine 343.

The protein belongs to the chorismate synthase family. Homotetramer. Requires FMNH2 as cofactor.

It carries out the reaction 5-O-(1-carboxyvinyl)-3-phosphoshikimate = chorismate + phosphate. The protein operates within metabolic intermediate biosynthesis; chorismate biosynthesis; chorismate from D-erythrose 4-phosphate and phosphoenolpyruvate: step 7/7. Catalyzes the anti-1,4-elimination of the C-3 phosphate and the C-6 proR hydrogen from 5-enolpyruvylshikimate-3-phosphate (EPSP) to yield chorismate, which is the branch point compound that serves as the starting substrate for the three terminal pathways of aromatic amino acid biosynthesis. This reaction introduces a second double bond into the aromatic ring system. The protein is Chorismate synthase of Chlorobaculum tepidum (strain ATCC 49652 / DSM 12025 / NBRC 103806 / TLS) (Chlorobium tepidum).